Here is an 814-residue protein sequence, read N- to C-terminus: Oxysterol-binding protein-related protein 1C (814 aa).

Positions 103–235 constitute a PH domain; that stretch reads GNGIAGILYK…WVEALQAVKD (133 aa). Positions 300–367 form a coiled coil; it reads LLIDTLRQLE…AEEEFDEEEN (68 aa). Disordered regions lie at residues 319–366 and 379–411; these read VVDE…DEEE and SSFK…PSIK. Over residues 347–366 the composition is skewed to acidic residues; the sequence is ESDDDNERGDAAEEEFDEEE. The span at 379-394 shows a compositional bias: low complexity; the sequence is SSFKSSGSGFRTSSFS. Acidic residues predominate over residues 395–407; that stretch reads SDEDGFESEDDID.

Belongs to the OSBP family. In terms of tissue distribution, expressed in roots, leaves, stems, flowers and pollen.

Functionally, may be involved in the transport of sterols. In Arabidopsis thaliana (Mouse-ear cress), this protein is Oxysterol-binding protein-related protein 1C (ORP1C).